A 137-amino-acid polypeptide reads, in one-letter code: Basic phospholipase A2 homolog 4a (137 aa).

Residues 1–16 (MRTLWIVTVLLVGVEG) form the signal peptide. Intrachain disulfides connect Cys42-Cys131, Cys44-Cys60, Cys59-Cys111, Cys65-Cys137, Cys66-Cys104, Cys73-Cys97, and Cys91-Cys102. The tract at residues 121–133 (KKYKIYPKFFCKK) is important for membrane-damaging activities in eukaryotes and bacteria; heparin-binding.

This sequence belongs to the phospholipase A2 family. Group II subfamily. K49 sub-subfamily. In terms of assembly, homodimer; non-covalently linked. In terms of tissue distribution, expressed by the venom gland.

The protein resides in the secreted. Functionally, snake venom phospholipase A2 homolog that lacks enzymatic activity. Is myotoxic and displays edema-inducing activities. A model of myotoxic mechanism has been proposed: an apo Lys49-PLA2 is activated by the entrance of a hydrophobic molecule (e.g. fatty acid) at the hydrophobic channel of the protein leading to a reorientation of a monomer. This reorientation causes a transition between 'inactive' to 'active' states, causing alignment of C-terminal and membrane-docking sites (MDoS) side-by-side and putting the membrane-disruption sites (MDiS) in the same plane, exposed to solvent and in a symmetric position for both monomers. The MDoS region stabilizes the toxin on membrane by the interaction of charged residues with phospholipid head groups. Subsequently, the MDiS region destabilizes the membrane with penetration of hydrophobic residues. This insertion causes a disorganization of the membrane, allowing an uncontrolled influx of ions (i.e. calcium and sodium), and eventually triggering irreversible intracellular alterations and cell death. This Bothrops asper (Terciopelo) protein is Basic phospholipase A2 homolog 4a.